Here is a 422-residue protein sequence, read N- to C-terminus: L-cysteine:1D-myo-inositol 2-amino-2-deoxy-alpha-D-glucopyranoside ligase (422 aa).

Position 43 (C43) interacts with Zn(2+). L-cysteinyl-5'-AMP contacts are provided by residues 43–46 (CGIT), T58, and 81–83 (NVT). A 'HIGH' region motif is present at residues 45–55 (ITPYDATHLGH). Positions 185–200 (AERGGDPDRPGKRNRL) are enriched in basic and acidic residues. Positions 185 to 221 (AERGGDPDRPGKRNRLDPMLWRGRRPGEPSWPGPRGV) are disordered. Residues 186-191 (ERGGDP) carry the 'ERGGDP' region motif. W227 serves as a coordination point for L-cysteinyl-5'-AMP. C231 serves as a coordination point for Zn(2+). Residue 249–251 (GSD) coordinates L-cysteinyl-5'-AMP. A Zn(2+)-binding site is contributed by H256. Residue I288 participates in L-cysteinyl-5'-AMP binding. The 'KMSKS' region motif lies at 294–298 (KMSKS).

Belongs to the class-I aminoacyl-tRNA synthetase family. MshC subfamily. In terms of assembly, monomer. Zn(2+) serves as cofactor.

The catalysed reaction is 1D-myo-inositol 2-amino-2-deoxy-alpha-D-glucopyranoside + L-cysteine + ATP = 1D-myo-inositol 2-(L-cysteinylamino)-2-deoxy-alpha-D-glucopyranoside + AMP + diphosphate + H(+). Catalyzes the ATP-dependent condensation of GlcN-Ins and L-cysteine to form L-Cys-GlcN-Ins. The polypeptide is L-cysteine:1D-myo-inositol 2-amino-2-deoxy-alpha-D-glucopyranoside ligase (Geodermatophilus obscurus (strain ATCC 25078 / DSM 43160 / JCM 3152 / CCUG 61914 / KCC A-0152 / KCTC 9177 / NBRC 13315 / NRRL B-3577 / G-20)).